Consider the following 434-residue polypeptide: Eukaryotic translation initiation factor 3 subunit E-1 (434 aa).

A PCI domain is found at F219–L392.

The protein belongs to the eIF-3 subunit E family. As to quaternary structure, component of the eukaryotic translation initiation factor 3 (eIF-3) complex. The eIF-3 complex interacts with pix. Interacts with mxt.

The protein localises to the cytoplasm. Component of the eukaryotic translation initiation factor 3 (eIF-3) complex, which is involved in protein synthesis of a specialized repertoire of mRNAs and, together with other initiation factors, stimulates binding of mRNA and methionyl-tRNAi to the 40S ribosome. The eIF-3 complex specifically targets and initiates translation of a subset of mRNAs involved in cell proliferation. The chain is Eukaryotic translation initiation factor 3 subunit E-1 (eIF3-S6-1) from Drosophila willistoni (Fruit fly).